Consider the following 318-residue polypeptide: Coproporphyrin III ferrochelatase (318 aa).

Fe(2+) is bound by residues H186 and E268.

Belongs to the ferrochelatase family.

Its subcellular location is the cytoplasm. The catalysed reaction is Fe-coproporphyrin III + 2 H(+) = coproporphyrin III + Fe(2+). Its pathway is porphyrin-containing compound metabolism; protoheme biosynthesis. Its function is as follows. Involved in coproporphyrin-dependent heme b biosynthesis. Catalyzes the insertion of ferrous iron into coproporphyrin III to form Fe-coproporphyrin III. The chain is Coproporphyrin III ferrochelatase from Lactococcus lactis subsp. cremoris (strain SK11).